The primary structure comprises 100 residues: Aspartyl/glutamyl-tRNA(Asn/Gln) amidotransferase subunit C (100 aa).

Belongs to the GatC family. In terms of assembly, heterotrimer of A, B and C subunits.

It catalyses the reaction L-glutamyl-tRNA(Gln) + L-glutamine + ATP + H2O = L-glutaminyl-tRNA(Gln) + L-glutamate + ADP + phosphate + H(+). The catalysed reaction is L-aspartyl-tRNA(Asn) + L-glutamine + ATP + H2O = L-asparaginyl-tRNA(Asn) + L-glutamate + ADP + phosphate + 2 H(+). In terms of biological role, allows the formation of correctly charged Asn-tRNA(Asn) or Gln-tRNA(Gln) through the transamidation of misacylated Asp-tRNA(Asn) or Glu-tRNA(Gln) in organisms which lack either or both of asparaginyl-tRNA or glutaminyl-tRNA synthetases. The reaction takes place in the presence of glutamine and ATP through an activated phospho-Asp-tRNA(Asn) or phospho-Glu-tRNA(Gln). The chain is Aspartyl/glutamyl-tRNA(Asn/Gln) amidotransferase subunit C from Streptococcus suis (strain 98HAH33).